We begin with the raw amino-acid sequence, 113 residues long: Nitrogenase vanadium-iron protein delta chain (113 aa).

Hexamer of two alpha, two beta, and two delta chains. The cofactor is iron-sulfur cluster. Requires vanadium cation as cofactor.

It catalyses the reaction N2 + 8 reduced [2Fe-2S]-[ferredoxin] + 16 ATP + 16 H2O = H2 + 8 oxidized [2Fe-2S]-[ferredoxin] + 2 NH4(+) + 16 ADP + 16 phosphate + 6 H(+). Its function is as follows. The key enzymatic reactions in nitrogen fixation are catalyzed by the nitrogenase complex, which has 2 components: the iron protein (component 2) and a component 1 which is either a molybdenum-iron protein, a vanadium-iron, or an iron-iron protein. In Azotobacter salinestris, this protein is Nitrogenase vanadium-iron protein delta chain (vnfG).